A 143-amino-acid chain; its full sequence is Transcriptional regulator MraZ (143 aa).

2 consecutive SpoVT-AbrB domains span residues 5–47 (TYTP…PRAA) and 76–119 (TDEQ…DAQA).

This sequence belongs to the MraZ family. In terms of assembly, forms oligomers.

The protein localises to the cytoplasm. It localises to the nucleoid. This chain is Transcriptional regulator MraZ, found in Mycobacterium bovis (strain ATCC BAA-935 / AF2122/97).